Reading from the N-terminus, the 612-residue chain is Apoptosis-inducing factor 1, mitochondrial (612 aa).

Short sequence motifs (mitochondrial localization signal) lie at residues 1-30 and 62-88; these read MFRC…PKQR and KMDN…KTIK. A mitochondrion-targeting transit peptide spans 1 to 54; that stretch reads MFRCGGLAGAFKQKLVPLVRTVYVQRPKQRNRLPGNLFQQWRVPLELQMARQMA. The propeptide at 55-101 is removed in mature form; sequence SSGSSGGKMDNSVLVLIVGLSTIGAGAYAYKTIKEDQKRYNERVMGL. Position 108 is an N6-succinyllysine (Lys108). Ser115 bears the Phosphoserine mark. Positions 133–482 are FAD-dependent oxidoreductase; sequence FLLIGGGTAA…KPYWHQSMFW (350 aa). Residues 137–141, 163–164, Arg171, and Lys176 each bind FAD; these read GGGTA and ED. NAD(+) is bound at residue Trp195. Residue Val232 coordinates FAD. Lys254 is covalently cross-linked (Glycyl lysine isopeptide (Lys-Gly) (interchain with G-Cter in ubiquitin)). Ser267 carries the phosphoserine modification. FAD is bound at residue Arg284. Residues 307–310, Glu335, and Lys341 contribute to the NAD(+) site; that span reads GGFL. Ser370 is subject to Phosphoserine. An N6-acetyllysine modification is found at Lys387. Gly398 serves as a coordination point for NAD(+). Asp437 contributes to the FAD binding site. The Nuclear localization signal signature appears at 445–450; it reads KLGRRR. NAD(+)-binding positions include 452 to 453, Trp482, and Glu492; that span reads EH. Residues 453 to 454 and Trp482 contribute to the FAD site; that span reads HH. Over residues 512–528 the composition is skewed to polar residues; sequence AQDNPKSATEQSGTGIR. Positions 512 to 551 are disordered; that stretch reads AQDNPKSATEQSGTGIRSESETESEASEITIPPSAPAVPQ. The residue at position 520 (Thr520) is a Phosphothreonine. Phosphoserine occurs at positions 523 and 529. Position 582 (Asn582) interacts with NAD(+). Lys592 carries the post-translational modification N6-acetyllysine.

It belongs to the FAD-dependent oxidoreductase family. Monomer (oxidized form). Homodimer (reduced form). Upon reduction with NADH, undergoes dimerization and forms tight, long-lived FADH2-NAD charge transfer complexes (CTC) resistant to oxidation. Also dimerizes with isoform 3 preventing its release from mitochondria. Interacts with XIAP/BIRC4. Interacts (via N-terminus) with EIF3G (via C-terminus). Interacts with PRELID1. Interacts with CHCHD4; the interaction increases in presence of NADH. Interacts with processed form of PARP1 (Poly [ADP-ribose] polymerase 1, processed C-terminus); interaction is mediated with poly-ADP-ribose chains attached to PARP1, promoting translocation into the nucleus. It depends on FAD as a cofactor. Post-translationally, under normal conditions, a 54-residue N-terminal segment is first proteolytically removed during or just after translocation into the mitochondrial intermembrane space (IMS) by the mitochondrial processing peptidase (MPP) to form the inner-membrane-anchored mature form (AIFmit). During apoptosis, it is further proteolytically processed at amino-acid position 101 leading to the generation of the mature form, which is confined to the mitochondrial IMS in a soluble form (AIFsol). AIFsol is released to the cytoplasm in response to specific death signals, and translocated to the nucleus, where it induces nuclear apoptosis in a caspase-independent manner. Ubiquitination by XIAP/BIRC4 does not lead to proteasomal degradation. Ubiquitination at Lys-254 by XIAP/BIRC4 blocks its ability to bind DNA and induce chromatin degradation, thereby inhibiting its ability to induce cell death. Expressed in cortical neurons (at protein level). In terms of tissue distribution, expressed in liver (at protein level).

The protein resides in the mitochondrion intermembrane space. Its subcellular location is the mitochondrion inner membrane. It localises to the cytoplasm. The protein localises to the nucleus. It is found in the perinuclear region. The protein resides in the mitochondrion. Its subcellular location is the cytosol. The catalysed reaction is A + NADH + H(+) = AH2 + NAD(+). Its function is as follows. Functions both as NADH oxidoreductase and as regulator of apoptosis. In response to apoptotic stimuli, it is released from the mitochondrion intermembrane space into the cytosol and to the nucleus, where it functions as a proapoptotic factor in a caspase-independent pathway. Release into the cytoplasm is mediated upon binding to poly-ADP-ribose chains. The soluble form (AIFsol) found in the nucleus induces 'parthanatos' i.e. caspase-independent fragmentation of chromosomal DNA. Binds to DNA in a sequence-independent manner. Interacts with EIF3G, and thereby inhibits the EIF3 machinery and protein synthesis, and activates caspase-7 to amplify apoptosis. Plays a critical role in caspase-independent, pyknotic cell death in hydrogen peroxide-exposed cells. In contrast, participates in normal mitochondrial metabolism. Plays an important role in the regulation of respiratory chain biogenesis by interacting with CHCHD4 and controlling CHCHD4 mitochondrial import. The chain is Apoptosis-inducing factor 1, mitochondrial from Mus musculus (Mouse).